A 282-amino-acid chain; its full sequence is Phosphatidylserine decarboxylase proenzyme (282 aa).

Active-site charge relay system; for autoendoproteolytic cleavage activity residues include aspartate 85, histidine 142, and serine 244. Serine 244 serves as the catalytic Schiff-base intermediate with substrate; via pyruvic acid; for decarboxylase activity. Serine 244 is subject to Pyruvic acid (Ser); by autocatalysis.

This sequence belongs to the phosphatidylserine decarboxylase family. PSD-B subfamily. Prokaryotic type I sub-subfamily. As to quaternary structure, heterodimer of a large membrane-associated beta subunit and a small pyruvoyl-containing alpha subunit. Requires pyruvate as cofactor. Post-translationally, is synthesized initially as an inactive proenzyme. Formation of the active enzyme involves a self-maturation process in which the active site pyruvoyl group is generated from an internal serine residue via an autocatalytic post-translational modification. Two non-identical subunits are generated from the proenzyme in this reaction, and the pyruvate is formed at the N-terminus of the alpha chain, which is derived from the carboxyl end of the proenzyme. The autoendoproteolytic cleavage occurs by a canonical serine protease mechanism, in which the side chain hydroxyl group of the serine supplies its oxygen atom to form the C-terminus of the beta chain, while the remainder of the serine residue undergoes an oxidative deamination to produce ammonia and the pyruvoyl prosthetic group on the alpha chain. During this reaction, the Ser that is part of the protease active site of the proenzyme becomes the pyruvoyl prosthetic group, which constitutes an essential element of the active site of the mature decarboxylase.

The protein localises to the cell membrane. The catalysed reaction is a 1,2-diacyl-sn-glycero-3-phospho-L-serine + H(+) = a 1,2-diacyl-sn-glycero-3-phosphoethanolamine + CO2. It functions in the pathway phospholipid metabolism; phosphatidylethanolamine biosynthesis; phosphatidylethanolamine from CDP-diacylglycerol: step 2/2. In terms of biological role, catalyzes the formation of phosphatidylethanolamine (PtdEtn) from phosphatidylserine (PtdSer). In Coxiella burnetii (strain CbuG_Q212) (Coxiella burnetii (strain Q212)), this protein is Phosphatidylserine decarboxylase proenzyme.